The chain runs to 280 residues: Orotidine 5'-phosphate decarboxylase (280 aa).

Catalysis depends on Lys96, which acts as the Proton donor.

The protein belongs to the OMP decarboxylase family. Type 2 subfamily.

The catalysed reaction is orotidine 5'-phosphate + H(+) = UMP + CO2. The protein operates within pyrimidine metabolism; UMP biosynthesis via de novo pathway; UMP from orotate: step 2/2. This is Orotidine 5'-phosphate decarboxylase from Parabacteroides distasonis (strain ATCC 8503 / DSM 20701 / CIP 104284 / JCM 5825 / NCTC 11152).